We begin with the raw amino-acid sequence, 160 residues long: Eosinophil cationic protein (160 aa).

A signal peptide spans 1–27 (MVPKLFTSQICLLLLLGLMGVEGSLHA). A required for nearly all of the bactericidal activities; partially involved in LPS-binding region spans residues 28–72 (RPPQFTKAQWFAIQHINVNPPRCTIAMRVINNYQRRCKNQNTFLR). Histidine 42 (proton acceptor) is an active-site residue. Intrachain disulfides connect cysteine 50–cysteine 110, cysteine 64–cysteine 123, cysteine 82–cysteine 138, and cysteine 89–cysteine 98. Tyrosine 60 bears the 3'-nitrotyrosine mark. Substrate is bound at residue 65-69 (KNQNT). N-linked (GlcNAc...) asparagine glycosylation is found at asparagine 92 and asparagine 119. Catalysis depends on histidine 155, which acts as the Proton donor.

Belongs to the pancreatic ribonuclease family. In terms of assembly, interacts with bacterial lipopolysaccharide (LPS) and lipoteichoic acid (LTA). In vitro interacts with phospholipid bilayers.

The protein localises to the secreted. Cytotoxin and helminthotoxin with low-efficiency ribonuclease activity. Possesses a wide variety of biological activities. Exhibits antibacterial activity. This is Eosinophil cationic protein (RNASE3) from Macaca fascicularis (Crab-eating macaque).